The following is an 844-amino-acid chain: Rho guanine nucleotide exchange factor 33 (844 aa).

2 stretches are compositionally biased toward basic and acidic residues: residues 1–13 (MEKT…ENEH) and 101–113 (QQKI…EKRR). 3 disordered regions span residues 1–20 (MEKT…NNPS), 101–142 (QQKI…GSPF), and 169–189 (AQES…MGPG). Residues 54 to 129 (LEEKVKSCRC…AKKTQKEEHS (76 aa)) adopt a coiled-coil conformation. A compositionally biased stretch (polar residues) spans 130 to 142 (SQAGPAQAQGSPF). The DH domain maps to 265-440 (KRQTVALELL…RVFISHYTLL (176 aa)). Disordered regions lie at residues 498–541 (LQPY…DWEL), 668–687 (RPEH…AGSS), and 702–745 (AKPL…RAAQ). Arg-757 carries the omega-N-methylarginine modification. Positions 787–800 (DTTRFCPKEERESE) are enriched in basic and acidic residues. The disordered stretch occupies residues 787-844 (DTTRFCPKEERESEQTSFSDQNPRQDQKGGFRSSFRKLFKKKNGNATGEDFCGPWGWW). The span at 820-829 (SFRKLFKKKN) shows a compositional bias: basic residues.

May act as a guanine-nucleotide releasing factor. The protein is Rho guanine nucleotide exchange factor 33 (ARHGEF33) of Homo sapiens (Human).